Consider the following 452-residue polypeptide: Tylactone mycaminosyltransferase (452 aa).

The segment covering 1 to 16 (MRRALDDRRRGPHGPE) has biased composition (basic and acidic residues). Residues 1 to 20 (MRRALDDRRRGPHGPEGKPP) are disordered.

Belongs to the glycosyltransferase 28 family.

It carries out the reaction tylactone + dTDP-alpha-D-mycaminose = 5-O-beta-D-mycaminosyltylactone + dTDP + H(+). It functions in the pathway antibiotic biosynthesis; tylosin biosynthesis. With respect to regulation, the activity of TylM2 is substantially increased by the addition of the accessory protein TylM3. Its function is as follows. Involved in the biosynthesis of the macrolide antibiotic tylosin derived from the polyketide lactone tylactone. Catalyzes the transfer of alpha-D-mycaminosyl from dTDP-alpha-D-mycaminose to the 5-hydroxyl group of tylactone to yield 5-O-mycaminosytylactone. It can also accept 16-membered tylactone and 12-membered ring macrolide. The chain is Tylactone mycaminosyltransferase from Streptomyces fradiae (Streptomyces roseoflavus).